We begin with the raw amino-acid sequence, 318 residues long: Cytochrome f (318 aa).

Residues 1-34 (MKNNYLANLIKTLQAIVVSVALLAPLVLPSAVNA) form the signal peptide. Residues Phe-35, Cys-55, Cys-58, and His-59 each coordinate heme. The chain crosses the membrane as a helical span at residues 284-304 (VKGLIAFFFTVILAQILLVLK).

Belongs to the cytochrome f family. The 4 large subunits of the cytochrome b6-f complex are cytochrome b6, subunit IV (17 kDa polypeptide, petD), cytochrome f and the Rieske protein, while the 4 small subunits are PetG, PetL, PetM and PetN. The complex functions as a dimer. Heme is required as a cofactor.

Its subcellular location is the plastid. It localises to the chloroplast thylakoid membrane. Functionally, component of the cytochrome b6-f complex, which mediates electron transfer between photosystem II (PSII) and photosystem I (PSI), cyclic electron flow around PSI, and state transitions. This chain is Cytochrome f, found in Rhodomonas salina (Cryptomonas salina).